The primary structure comprises 578 residues: Membrane protein insertase YidC (578 aa).

Residues 3–23 (IQRSILIVALAVVSYLLVLQW) form a helical membrane-spanning segment. Residues 34 to 72 (AASASMNTTQGLPDTPSASGTSSDVPTAQSSAAGSEAAD) form a disordered region. Positions 37 to 66 (ASMNTTQGLPDTPSASGTSSDVPTAQSSAA) are enriched in polar residues. A run of 5 helical transmembrane segments spans residues 361-381 (LELT…FWLL), 387-407 (LIGN…LAFF), 457-477 (LGGC…YWVL), 500-520 (PFFI…MLNP), and 535-555 (PIIF…YWVV).

It belongs to the OXA1/ALB3/YidC family. Type 1 subfamily. As to quaternary structure, interacts with the Sec translocase complex via SecD. Specifically interacts with transmembrane segments of nascent integral membrane proteins during membrane integration.

The protein localises to the cell inner membrane. Functionally, required for the insertion and/or proper folding and/or complex formation of integral membrane proteins into the membrane. Involved in integration of membrane proteins that insert both dependently and independently of the Sec translocase complex, as well as at least some lipoproteins. Aids folding of multispanning membrane proteins. This Pseudomonas aeruginosa (strain LESB58) protein is Membrane protein insertase YidC.